The chain runs to 497 residues: Cytochrome P450 monooxygenase opdB (497 aa).

The chain crosses the membrane as a helical span at residues 26 to 46 (YLGAMAGSVILLISAFTLSLG). Positions 69 to 90 (MSKFTRSRELSQQGEDAAGTEP) are disordered. Cysteine 454 is a heme binding site.

The cofactor is heme.

The protein resides in the membrane. Its pathway is secondary metabolite biosynthesis. Cytochrome P450 monooxygenase; part of the gene cluster that mediates the biosynthesis of oxopyrrolidines, polyketide-amino acid hybrid compounds with feature structures of tetramic acid. Does not seem to play a role in oxopyrrolidines A and B biosynthesis. May be involved in further modifications of these oxopyrrolidines. In Penicillium oxalicum (strain 114-2 / CGMCC 5302) (Penicillium decumbens), this protein is Cytochrome P450 monooxygenase opdB.